The following is a 410-amino-acid chain: Arginine biosynthesis bifunctional protein ArgJ (410 aa).

Residues Thr158, Lys184, Thr195, Glu282, Asn405, and Ser410 each coordinate substrate. Residue Thr195 is the Nucleophile of the active site.

Belongs to the ArgJ family. Heterotetramer of two alpha and two beta chains.

The protein resides in the cytoplasm. It catalyses the reaction N(2)-acetyl-L-ornithine + L-glutamate = N-acetyl-L-glutamate + L-ornithine. The enzyme catalyses L-glutamate + acetyl-CoA = N-acetyl-L-glutamate + CoA + H(+). It participates in amino-acid biosynthesis; L-arginine biosynthesis; L-ornithine and N-acetyl-L-glutamate from L-glutamate and N(2)-acetyl-L-ornithine (cyclic): step 1/1. The protein operates within amino-acid biosynthesis; L-arginine biosynthesis; N(2)-acetyl-L-ornithine from L-glutamate: step 1/4. Functionally, catalyzes two activities which are involved in the cyclic version of arginine biosynthesis: the synthesis of N-acetylglutamate from glutamate and acetyl-CoA as the acetyl donor, and of ornithine by transacetylation between N(2)-acetylornithine and glutamate. The protein is Arginine biosynthesis bifunctional protein ArgJ of Bartonella henselae (strain ATCC 49882 / DSM 28221 / CCUG 30454 / Houston 1) (Rochalimaea henselae).